Reading from the N-terminus, the 700-residue chain is MAQQVLGCTSRPIRVSLHRCSVITTSDTIRRKNLRFVRNPRLSFSLQSSTRNYRLPSINCSTVNGAVAETAEYYEGEGDNVSLAEKIRQCIDFLRTILPGGSWWSFSDEVDGRFIAKPVTVWRALSRMWELVAEDRWVIFAAFSTLIVAALSEITIPHFLTASIFSAQSGDIAVFHRNVKLLVTLCVTSGICSGIRGCFFGIANMILVKRMRETLYSTLLFQDISFFDSQTVGDLTSRLGSDCQQVSRVIGNDLNMIFRNVLQGTGALIYLLILSWPLGLCTLVICCILAAVMFVYGMYQKKTAKLIQEITASANEVAQETYSLMRTVRVYGTEKQEFKRYNHWLQRLADISLRQSAAYGIWNWSFNTLYHATQIIAVLVGGLSILAGQITAEQLTKFLLYSEWLIYATWWVGDNLSSLMQSVGASEKVFQMMDLKPSDQFISKGTRLQRLTGHIEFVDVSFSYPSRDEVAVVQNVNISVHPGEVVAIVGLSGSGKSTLVNLLLQLYEPTSGQILLDGVPLKELDVKWLRQRIGYVGQEPKLFRTDISSNIKYGCDRNISQEDIISAAKQAYAHDFITALPNGYNTIVDDDLLSGGQKQRIAIARAILRDPRILILDEATSALDAESEHNVKGVLRSIGNDSATKRSVIVIAHRLSTIQAADRIVAMDSGRVVEMGSHKELLSKDGLYARLTKRQNDAVL.

The N-terminal 59 residues, 1-59 (MAQQVLGCTSRPIRVSLHRCSVITTSDTIRRKNLRFVRNPRLSFSLQSSTRNYRLPSIN), are a transit peptide targeting the chloroplast. The next 3 helical transmembrane spans lie at 137-157 (WVIF…ITIP), 182-202 (LVTL…FFGI), and 268-288 (LIYL…ICCI). Positions 139–421 (IFAAFSTLIV…VGDNLSSLMQ (283 aa)) constitute an ABC transmembrane type-1 domain. The region spanning 455–694 (IEFVDVSFSY…DGLYARLTKR (240 aa)) is the ABC transporter domain. 490-497 (GLSGSGKS) contributes to the ATP binding site.

It belongs to the ABC transporter superfamily. ABCB family. Multidrug resistance exporter (TC 3.A.1.201) subfamily.

It is found in the plastid. The protein resides in the chloroplast membrane. The sequence is that of ABC transporter B family member 26, chloroplastic (ABCB26) from Arabidopsis thaliana (Mouse-ear cress).